The primary structure comprises 264 residues: Indole-3-glycerol phosphate synthase (264 aa).

It belongs to the TrpC family.

The catalysed reaction is 1-(2-carboxyphenylamino)-1-deoxy-D-ribulose 5-phosphate + H(+) = (1S,2R)-1-C-(indol-3-yl)glycerol 3-phosphate + CO2 + H2O. Its pathway is amino-acid biosynthesis; L-tryptophan biosynthesis; L-tryptophan from chorismate: step 4/5. This chain is Indole-3-glycerol phosphate synthase, found in Albidiferax ferrireducens (strain ATCC BAA-621 / DSM 15236 / T118) (Rhodoferax ferrireducens).